The chain runs to 279 residues: Lipid phosphate phosphatase epsilon 1, chloroplastic (279 aa).

Residues 1 to 88 (MAASSSLLLL…SFINNSSEIR (88 aa)) constitute a chloroplast transit peptide. A run of 5 helical transmembrane segments spans residues 126–142 (LWAV…SVVL), 164–184 (SHAQ…MEWL), 185–205 (GTNG…SYFI), 219–239 (VVVG…MWNS), and 255–275 (VFLF…LNWF).

The protein belongs to the PA-phosphatase related phosphoesterase family. Expressed in root tips, root branch points, cotyledons and leaves.

It is found in the plastid. The protein localises to the chloroplast inner membrane. Its activity is regulated as follows. Inhibited by Mg(2+). Exhibits phosphatidate phosphatase (PAP) activity in vitro. May play a secondary role as PAP in plastids. This is Lipid phosphate phosphatase epsilon 1, chloroplastic (LPPE1) from Arabidopsis thaliana (Mouse-ear cress).